The sequence spans 374 residues: Speckle-type POZ protein A (374 aa).

An MATH domain is found at 31 to 161 (KFSYMWTINN…DDKLTLFCEV (131 aa)). A required for nuclear localization region spans residues 71–191 (VNPKGLDEES…PECRLADELG (121 aa)). A BTB domain is found at 173–297 (QNTMNMVKVP…MCEEALCSNL (125 aa)). The homodimerization stretch occupies residues 297-355 (LSVENAAEILILADLHSADQLKTQAVDFINYHASDVMETSGWKSMVVSHPHLVAEAYRS).

Belongs to the Tdpoz family. In terms of assembly, homodimer. Part of cullin-RING-based BCR (BTB-CUL3-RBX1) E3 ubiquitin-protein ligase complexes that contain CUL3 and SPOP, plus a target protein.

Its subcellular location is the nucleus. It localises to the nucleus speckle. Its pathway is protein modification; protein ubiquitination. Functionally, component of a cullin-RING-based BCR (BTB-CUL3-RBX1) E3 ubiquitin-protein ligase complex that mediates the ubiquitination of target proteins, leading most often to their proteasomal degradation. The polypeptide is Speckle-type POZ protein A (spop-a) (Xenopus laevis (African clawed frog)).